The chain runs to 289 residues: ATP synthase subunit a (289 aa).

6 helical membrane passes run Ala43–Phe63, Ile104–Ile124, Leu160–Ile180, Ile193–Ala213, Val232–Val252, and Ala259–Val279.

Belongs to the ATPase A chain family. As to quaternary structure, F-type ATPases have 2 components, CF(1) - the catalytic core - and CF(0) - the membrane proton channel. CF(1) has five subunits: alpha(3), beta(3), gamma(1), delta(1), epsilon(1). CF(0) has three main subunits: a(1), b(2) and c(9-12). The alpha and beta chains form an alternating ring which encloses part of the gamma chain. CF(1) is attached to CF(0) by a central stalk formed by the gamma and epsilon chains, while a peripheral stalk is formed by the delta and b chains.

Its subcellular location is the cell inner membrane. Functionally, key component of the proton channel; it plays a direct role in the translocation of protons across the membrane. The sequence is that of ATP synthase subunit a from Pseudomonas fluorescens (strain SBW25).